A 254-amino-acid polypeptide reads, in one-letter code: Large ribosomal subunit protein uL2 (254 aa).

It belongs to the universal ribosomal protein uL2 family.

The chain is Large ribosomal subunit protein uL2 (RPL2) from Eremothecium gossypii (strain ATCC 10895 / CBS 109.51 / FGSC 9923 / NRRL Y-1056) (Yeast).